The primary structure comprises 128 residues: Glycophorin-C (128 aa).

A compositionally biased stretch (polar residues) spans 1–12 (MWSTRSPNSTAW). The segment at 1–48 (MWSTRSPNSTAWPLSLEPDPGMASASTTMHTTTIAEPDPGMSGWPDGR) is disordered. Residues 1–57 (MWSTRSPNSTAWPLSLEPDPGMASASTTMHTTTIAEPDPGMSGWPDGRMETSTPTIM) lie on the Extracellular side of the membrane. O-linked (GalNAc...) serine glycosylation occurs at Ser-3. An O-linked (GalNAc...) threonine glycan is attached at Thr-4. Ser-6 carries an O-linked (GalNAc...) serine glycan. N-linked (GlcNAc...) asparagine glycosylation occurs at Asn-8. Residue Ser-9 is glycosylated (O-linked (GalNAc...) serine). Thr-10 carries an O-linked (GalNAc...) threonine glycan. Residues Ser-15, Ser-24, and Ser-26 are each glycosylated (O-linked (GalNAc...) serine). Residues 22 to 33 (MASASTTMHTTT) are compositionally biased toward low complexity. Residues Thr-27, Thr-28, Thr-31, Thr-32, and Thr-33 are each glycosylated (O-linked (GalNAc...) threonine). Residue Ser-42 is glycosylated (O-linked (GalNAc...) serine). Residues 58–81 (DIVVIAGVIAAVAIVLVSLLFVML) traverse the membrane as a helical; Signal-anchor for type III membrane protein segment. The Cytoplasmic segment spans residues 82–128 (RYMYRHKGTYHTNEAKGTEFAESADAALQGDPALQDAGDSSRKEYFI). Phosphoserine occurs at positions 104 and 122. Positions 108–128 (ALQGDPALQDAGDSSRKEYFI) are disordered.

This sequence belongs to the glycophorin-C family. In terms of processing, O-glycosylated with core 1 or possibly core 8 glycans. As to expression, glycophorin-C is expressed in erythrocytes. Glycophorin-D and IsoGPC are ubiquitously expressed.

Its subcellular location is the cell membrane. This protein is a minor sialoglycoprotein in human erythrocyte membranes. The blood group Gerbich antigens and receptors for Plasmodium falciparum merozoites are most likely located within the extracellular domain. Glycophorin-C plays an important role in regulating the stability of red cells. The polypeptide is Glycophorin-C (GYPC) (Homo sapiens (Human)).